Reading from the N-terminus, the 517-residue chain is Gamma-1-syntrophin (517 aa).

Residues 57–140 form the PDZ domain; the sequence is TVTIRRQTVG…EVTLTVSFLK (84 aa). A PH domain is found at 283–390; that stretch reads QIVYMGWCEA…WERAFQTATF (108 aa).

It belongs to the syntrophin family. Interacts with the dystrophin protein DMD and related proteins DTNA and DTNB. Interacts with DGKZ.

The protein localises to the cytoplasm. Its subcellular location is the cytoskeleton. It localises to the nucleus. Adapter protein that binds to and probably organizes the subcellular localization of a variety of proteins. May link various receptors to the actin cytoskeleton and the dystrophin glycoprotein complex. May participate in regulating the subcellular location of diacylglycerol kinase-zeta to ensure that diacylglycerol is rapidly inactivated following receptor activation. This is Gamma-1-syntrophin (Sntg1) from Mus musculus (Mouse).